The chain runs to 164 residues: Lipoprotein signal peptidase (164 aa).

The next 3 membrane-spanning stretches (helical) occupy residues 12-32 (WLWLVVVVLIIDLGSKYLILQ), 70-90 (WFFAGIAIGISVILAVMMYRL), and 102-122 (ALIIGGALGNLFDRLWHGFVV). Residues Asp123 and Asp141 contribute to the active site. Residues 137–157 (FNLADTAICVGAALIVLEGFL) traverse the membrane as a helical segment.

This sequence belongs to the peptidase A8 family.

It is found in the cell inner membrane. The enzyme catalyses Release of signal peptides from bacterial membrane prolipoproteins. Hydrolyzes -Xaa-Yaa-Zaa-|-(S,diacylglyceryl)Cys-, in which Xaa is hydrophobic (preferably Leu), and Yaa (Ala or Ser) and Zaa (Gly or Ala) have small, neutral side chains.. It functions in the pathway protein modification; lipoprotein biosynthesis (signal peptide cleavage). This protein specifically catalyzes the removal of signal peptides from prolipoproteins. This is Lipoprotein signal peptidase from Shigella boydii serotype 4 (strain Sb227).